The sequence spans 366 residues: Alanine racemase (366 aa).

Lys40 serves as the catalytic Proton acceptor; specific for D-alanine. N6-(pyridoxal phosphate)lysine is present on Lys40. Residue Arg136 coordinates substrate. Tyr263 (proton acceptor; specific for L-alanine) is an active-site residue. Met310 lines the substrate pocket.

Belongs to the alanine racemase family. Requires pyridoxal 5'-phosphate as cofactor.

The catalysed reaction is L-alanine = D-alanine. The protein operates within amino-acid biosynthesis; D-alanine biosynthesis; D-alanine from L-alanine: step 1/1. In terms of biological role, catalyzes the interconversion of L-alanine and D-alanine. May also act on other amino acids. In Streptococcus equi subsp. zooepidemicus (strain H70), this protein is Alanine racemase (alr).